A 312-amino-acid polypeptide reads, in one-letter code: Olfactory receptor 1D2 (312 aa).

Topologically, residues 1–25 are extracellular; it reads MDGGNQSEGSEFLLLGMSESPEQQR. An N-linked (GlcNAc...) asparagine glycan is attached at Asn5. The chain crosses the membrane as a helical span at residues 26–49; that stretch reads ILFWMFLSMYLVTVVGNVLIILAI. At 50-57 the chain is on the cytoplasmic side; it reads SSDSCLHT. The helical transmembrane segment at 58–79 threads the bilayer; that stretch reads PMYFFLANLSFTDLFFVTNTIP. Residues 80-100 are Extracellular-facing; the sequence is KMLVNLQSQNKAISYAGCLTQ. The cysteines at positions 97 and 189 are disulfide-linked. A helical transmembrane segment spans residues 101-120; it reads LYFLVSLVALDNLILAVMAY. The Cytoplasmic portion of the chain corresponds to 121-139; sequence DRYVAICCPLHYTTAMSPK. The helical transmembrane segment at 140 to 158 threads the bilayer; the sequence is LCILLLSLCWVLSVLYGLI. The Extracellular portion of the chain corresponds to 159–196; sequence HTLLMTRVTFCGSRKIHYIFCEMYVLLRMACSNIQTNH. Residue Asn195 is glycosylated (N-linked (GlcNAc...) asparagine). Residues 197–219 traverse the membrane as a helical segment; the sequence is TVLIATGCFIFLIPFGFVIISYV. Topologically, residues 220-236 are cytoplasmic; it reads LIIRAILRIPSLSKKYK. The chain crosses the membrane as a helical span at residues 237–259; the sequence is AFSTCASHLGAVSLFYGTLCMVY. The Extracellular portion of the chain corresponds to 260–271; the sequence is LKPLHTYSVKDS. A helical transmembrane segment spans residues 272-291; sequence VATVMYAVVTPMMNPFIYSL. Residues 292–312 are Cytoplasmic-facing; the sequence is RNKDMHGALGRLLDKHFKRLT.

The protein belongs to the G-protein coupled receptor 1 family.

It is found in the cell membrane. Odorant receptor. The polypeptide is Olfactory receptor 1D2 (OR1D2) (Pan troglodytes (Chimpanzee)).